The following is a 236-amino-acid chain: Small ribosomal subunit protein uS2c (236 aa).

It belongs to the universal ribosomal protein uS2 family.

The protein resides in the plastid. This is Small ribosomal subunit protein uS2c (rps2) from Cuscuta exaltata (Tall dodder).